A 709-amino-acid polypeptide reads, in one-letter code: Caprin-1 (709 aa).

Low complexity-rich tracts occupy residues 1–15 and 22–43; these read MPSA…SKSS and GSSG…QHPA. The disordered stretch occupies residues 1-50; that stretch reads MPSATSHSGSGSKSSGPPPPSGSSGSEAAAGAGAAAPASQHPATGTGAVQ. Pro2 bears the N-acetylproline mark. The residue at position 2 (Pro2) is an N-acetylalanine. The residue at position 10 (Ser10) is a Phosphoserine. Residues 60 to 94 adopt a coiled-coil conformation; sequence VIDKKLRNLEKKKGKLDDYQERMNKGERLNQDQLD. Position 115 is a phosphoserine (Ser115). Positions 125-153 form a coiled coil; it reads KTIKKTARREQLMREEAEQKRLKTVLELQ. Arg165 is subject to Omega-N-methylarginine. The segment at 260–291 is disordered; the sequence is EEAASAPAVEDQVPEAEPEPAEEYTEQSEVES. The span at 271–291 shows a compositional bias: acidic residues; sequence QVPEAEPEPAEEYTEQSEVES. 2 positions are modified to phosphoserine: Ser335 and Ser343. The G3BP1-binding stretch occupies residues 360-381; sequence QDLMAQMQGPYNFIQDSMLDFE. 3 disordered regions span residues 417–446, 475–499, and 524–709; these read LAQP…TASQ, TDQT…GTSK, and APVP…QQVN. Residues 433–446 show a composition bias toward polar residues; the sequence is PLVSSTSEGYTASQ. 2 stretches are compositionally biased toward low complexity: residues 477–491 and 537–570; these read QTTA…SQPQ and QQNQ…QTVV. Positions 577 to 605 are enriched in polar residues; sequence PDQSHQVTGNHQQPPQQNTGFPRSNQPYY. Phosphotyrosine; by EPHA4 is present on Tyr625. Omega-N-methylarginine is present on residues Arg626 and Arg633. Phosphotyrosine; by EPHA4 occurs at positions 636 and 639. An Omega-N-methylarginine modification is found at Arg640. A compositionally biased stretch (polar residues) spans 642–657; that stretch reads SFSNTPNSGYTQSQFS. O-linked (GlcNAc) serine glycosylation is found at Ser644 and Ser649. 4 positions are modified to phosphotyrosine; by EPHA4: Tyr651, Tyr662, Tyr665, and Tyr670. 2 stretches are compositionally biased toward low complexity: residues 676–686 and 697–709; these read RGSGQSGPRGA and NRGM…QQVN. Arg698 carries the asymmetric dimethylarginine; alternate modification. Position 698 is an omega-N-methylarginine; alternate (Arg698).

It belongs to the caprin family. In terms of assembly, may form homomultimers. Interacts with G3BP1; interaction is direct and promotes stress granule formation. Interacts with G3BP2; interaction is direct and promotes stress granule formation. Interacts with PQBP1. Interacts with DDX3X. Interacts (when phosphorylated by EPHA4) with FMR1; interaction with FMR1 promotes formation of a membraneless compartment. As to quaternary structure, (Microbial infection) Interacts with Zika virus capsid protein C; this interaction is probably linked to the inhibition of stress granules formation by the virus. (Microbial infection) Interacts with rotavirus A non-structural protein 5; this interaction probably plays a role in the sequestration of CAPRIN1 in viral factories. In terms of assembly, (Microbial infection) Interacts with Japanese encephalitis virus capsid protein C; this interaction is involved in the suppression of the integrated stress response by the virus. In terms of processing, tyrosine phosphorylation by EPHA4 promotes interaction with FMR1 and liquid-liquid phase separation (LLPS) for the formation of a membraneless compartment that concentrates mRNAs with associated regulatory factors. Post-translationally, O-glycosylated (O-GlcNAcylated), in a cell cycle-dependent manner. O-glycosylation by OGT inhibit ability to undergo liquid-liquid phase separation (LLPS). As to expression, ubiquitous.

It localises to the cytoplasm. It is found in the cytoplasmic ribonucleoprotein granule. The protein resides in the cytosol. Its subcellular location is the cell projection. The protein localises to the dendrite. It localises to the lamellipodium. With respect to regulation, ability to mediate liquid-liquid phase separation is regulated by ATP: moderate concentrations of ATP enhance phase separation, whereas high concentrations of ATP lead to inhibition of phase separation. MRNA-binding protein that acts as a regulator of mRNAs transport, translation and/or stability, and which is involved in neurogenesis, synaptic plasticity in neurons and cell proliferation and migration in multiple cell types. Plays an essential role in cytoplasmic stress granule formation. Acts as an mRNA regulator by mediating formation of some phase-separated membraneless compartment: undergoes liquid-liquid phase separation upon binding to target mRNAs, leading to assemble mRNAs into cytoplasmic ribonucleoprotein granules that concentrate mRNAs with associated regulatory factors. Undergoes liquid-liquid phase separation following phosphorylation and interaction with FMR1, promoting formation of cytoplasmic ribonucleoprotein granules that concentrate mRNAs with factors that inhibit translation and mediate deadenylation of target mRNAs. In these cytoplasmic ribonucleoprotein granules, CAPRIN1 mediates recruitment of CNOT7 deadenylase, leading to mRNA deadenylation and degradation. Binds directly and selectively to MYC and CCND2 mRNAs. In neuronal cells, directly binds to several mRNAs associated with RNA granules, including BDNF, CAMK2A, CREB1, MAP2, NTRK2 mRNAs, as well as to GRIN1 and KPNB1 mRNAs, but not to rRNAs. The sequence is that of Caprin-1 from Homo sapiens (Human).